A 567-amino-acid polypeptide reads, in one-letter code: MGDLAMSVADIRMENEPDDLASDNVAEIDVSDEEIDADDLERRMWKDRVRLKRIKERQKAGSQGAQTKETPKKISDQAQRKKMSRAQDGILKYMLKLMEVCKVRGFVYGIIPEKGKPVSGSSDNIRAWWKEKVKFDKNGPAAIAKYEEECLAFGKSDGNRNSQFVLQDLQDATLGSLLSSLMQHCDPPQRKYPLEKGTPPPWWPTGNEEWWVKLGLPKSQSPPYRKPHDLKKMWKVGVLTAVINHMLPDIAKIKRHVRQSKCLQDKMTAKESAIWLAVLNQEESLIQQPSSDNGNSNVTETHRRGNNADRRKPVVNSDSDYDVDGTEEASGSVSSKDSRRNQIQKEQPTAISHSVRDQDKAEKHRRRKRPRIRSGTVNRQEEEQPEAQQRNILPDMNHVDAPLLEYNINGTHQEDDVVDPNIALGPEDNGLELVVPEFNNNYTYLPLVNEQTMMPVDERPMLYGPNPNQELQFGSGYNFYNPSAVFVHNQEDDILHTQIEMNTQAPPHNSGFEEAPGGVLQPLGLLGNEDGVTGSELPQYQSGILSPLTDLDFDYGGFGDDFSWFGA.

Positions 24 to 44 (NVAEIDVSDEEIDADDLERRM) form a coiled coil. 2 disordered regions span residues 55–81 (KERQ…AQRK) and 286–393 (IQQP…RNIL). Over residues 69 to 79 (ETPKKISDQAQ) the composition is skewed to basic and acidic residues. Residues 162 to 288 (SQFVLQDLQD…LNQEESLIQQ (127 aa)) mediate DNA binding. A compositionally biased stretch (polar residues) spans 286–299 (IQQPSSDNGNSNVT). Residues 300 to 312 (ETHRRGNNADRRK) show a composition bias toward basic and acidic residues. A compositionally biased stretch (basic residues) spans 363 to 372 (KHRRRKRPRI).

Belongs to the EIN3 family. In terms of assembly, interacts with MYB72.

The protein localises to the nucleus. Its function is as follows. Probable transcription factor that may be involved in the ethylene response pathway. This chain is ETHYLENE INSENSITIVE 3-like 3 protein (EIL3), found in Arabidopsis thaliana (Mouse-ear cress).